The chain runs to 61 residues: Large ribosomal subunit protein uL30 (61 aa).

It belongs to the universal ribosomal protein uL30 family. In terms of assembly, part of the 50S ribosomal subunit.

In Bifidobacterium adolescentis (strain ATCC 15703 / DSM 20083 / NCTC 11814 / E194a), this protein is Large ribosomal subunit protein uL30.